The primary structure comprises 309 residues: Formate-nitrite transporter (309 aa).

Over 1-19 the chain is Cytoplasmic; sequence MPPNNSKYVLDPVSIKSVC. An intramembrane region (helical) is located at residues 20-35; that stretch reads GGEESYIRCVEYGKKK. Residues 36 to 40 are Cytoplasmic-facing; sequence AHYSN. A helical transmembrane segment spans residues 41-68; the sequence is LNLLAKAILAGMFVGLCAHASGIAGGLF. Residues 69–79 are Extracellular-facing; the sequence is YYHKLREIVGA. The helical transmembrane segment at 80–100 threads the bilayer; that stretch reads SMSVFVYGFTFPIAFMCIICT. Over 101–122 the chain is Cytoplasmic; sequence GSDLFTGNTLAVTMALYEKKVK. The chain crosses the membrane as a helical span at residues 123–150; that stretch reads LLDYLRVMTISLFGNYVGAVSFAFFVSY. The Extracellular segment spans residues 151–163; sequence LSGAFTNVHAVEK. Residues 164 to 179 constitute an intramembrane region (helical); sequence NHFFQFLNDIAEKKVH. Residues 180 to 181 lie on the Extracellular side of the membrane; sequence HT. The helical transmembrane segment at 182 to 206 threads the bilayer; it reads FVECVSLAVGCNIFVCLAVYFVLTL. The Cytoplasmic segment spans residues 207 to 209; that stretch reads KDG. A helical transmembrane segment spans residues 210–226; that stretch reads AGYVFSVFFAVYAFAIA. Residues 227 to 249 are Extracellular-facing; it reads GYEHIIANIYTLNIALMVNTKIT. The helical transmembrane segment at 250–280 threads the bilayer; it reads VYQAYIKNLLPTLLGNYIAGAIVLGLPLYFI. Over 281-309 the chain is Cytoplasmic; sequence YKEHYYNFERSKRDNNDAQMKSLSIELRN.

This sequence belongs to the FNT transporter (TC 1.A.16) family. As to quaternary structure, homopentamer.

The protein resides in the cell membrane. It is found in the vacuole membrane. It catalyses the reaction (S)-lactate(in) + H(+)(in) = (S)-lactate(out) + H(+)(out). It carries out the reaction formate(in) + H(+)(in) = formate(out) + H(+)(out). The enzyme catalyses pyruvate(out) + H(+)(out) = pyruvate(in) + H(+)(in). The catalysed reaction is acetate(out) + H(+)(out) = acetate(in) + H(+)(in). Its activity is regulated as follows. Inhibited by diethylpyrocarbonate (DEPC). Protonophores, such as 2,4-dinitrophenol and carbonylcyanide-3-chlorophenylhydrazone, abolish transport. Inhibited by phloretin, furosemide, alpha-cyano-4-hydroxy-cinnamate and alpha-fluorocinnamate. Inhibited by the Malaria Box compound MMV007839 and its derivatives BH296 and BH267.meta. Inhibited by the Malaria Box compound MMV000972. Inhibited by broad-specificity anion transport inhibitor NPPB. Monocarboxylate-proton symporter that mediates the efflux of the waste product lactate in the intraerythrocytic parasites; active in acidic-to-neutral pH range. Transports L-lactate. Transports D-lactate, pyruvate, acetate and formate. Essential for asexual growth but dispensable for the development of gametocytes. This is Formate-nitrite transporter from Plasmodium falciparum (isolate 3D7).